The chain runs to 150 residues: Large ribosomal subunit protein bL9 (150 aa).

The protein belongs to the bacterial ribosomal protein bL9 family.

Binds to the 23S rRNA. The sequence is that of Large ribosomal subunit protein bL9 from Alkalilimnicola ehrlichii (strain ATCC BAA-1101 / DSM 17681 / MLHE-1).